The primary structure comprises 727 residues: Catalase-peroxidase (727 aa).

Positions 1–26 (MSDEKKCPVTGRTSSQVAGSGTSNKD) are disordered. Positions 11 to 26 (GRTSSQVAGSGTSNKD) are enriched in polar residues. The tryptophyl-tyrosyl-methioninium (Trp-Tyr) (with M-245) cross-link spans 96-219 (WHSAGTYRIG…LAAVQMGLIY (124 aa)). His-97 serves as the catalytic Proton acceptor. A cross-link (tryptophyl-tyrosyl-methioninium (Tyr-Met) (with W-96)) is located at residues 219–245 (YVNPEGPNGDPNAVASGKDVRETFARM). Residue His-260 coordinates heme b. A compositionally biased stretch (basic and acidic residues) spans 346-362 (SDPEAKKAVPDAHDPSK). Residues 346–365 (SDPEAKKAVPDAHDPSKTHP) are disordered.

It belongs to the peroxidase family. Peroxidase/catalase subfamily. Homodimer or homotetramer. The cofactor is heme b. Formation of the three residue Trp-Tyr-Met cross-link is important for the catalase, but not the peroxidase activity of the enzyme.

The catalysed reaction is H2O2 + AH2 = A + 2 H2O. The enzyme catalyses 2 H2O2 = O2 + 2 H2O. Its function is as follows. Bifunctional enzyme with both catalase and broad-spectrum peroxidase activity. The chain is Catalase-peroxidase from Maridesulfovibrio salexigens (strain ATCC 14822 / DSM 2638 / NCIMB 8403 / VKM B-1763) (Desulfovibrio salexigens).